Reading from the N-terminus, the 873-residue chain is Coatomer subunit gamma-2 (873 aa).

Residues 1-11 (MIKKFDKKDEE) are compositionally biased toward basic and acidic residues. Residues 1–21 (MIKKFDKKDEESGSGSNPFQH) are disordered. 6 HEAT repeats span residues 64–101 (TEAT…ISED), 283–320 (RELA…KHPS), 321–355 (AVTA…GSES), 356–392 (SVDR…KYPR), 395–430 (SVMM…ENPE), and 467–504 (PTPS…QNDD).

It belongs to the COPG family. As to quaternary structure, oligomeric complex.

It is found in the cytoplasm. The protein localises to the golgi apparatus membrane. Its subcellular location is the cytoplasmic vesicle. The protein resides in the COPI-coated vesicle membrane. Its function is as follows. The coatomer is a cytosolic protein complex that binds to dilysine motifs and reversibly associates with Golgi non-clathrin-coated vesicles, which further mediate biosynthetic protein transport from the ER, via the Golgi up to the trans Golgi network. Coatomer complex is required for budding from Golgi membranes, and is essential for the retrograde Golgi-to-ER transport of dilysine-tagged proteins. The polypeptide is Coatomer subunit gamma-2 (copg2) (Danio rerio (Zebrafish)).